The following is a 370-amino-acid chain: Putative agmatine deiminase (370 aa).

The active-site Amidino-cysteine intermediate is Cys-361.

It belongs to the agmatine deiminase family.

It carries out the reaction agmatine + H2O = N-carbamoylputrescine + NH4(+). This is Putative agmatine deiminase from Shewanella sp. (strain MR-7).